Here is a 383-residue protein sequence, read N- to C-terminus: Probable cytosolic iron-sulfur protein assembly protein 1 (383 aa).

WD repeat units follow at residues 10-49 (AHNDKVWSVSVHPTLPIIATASTDKSTKLYKLSARQKFPL), 56-108 (THKR…VEYD), 135-175 (GHEN…EEFE), 182-221 (DHSQDVKNVSWHPSMNILASSSYDDTIRIYQQDIAGDEWS), 228-275 (GHEG…EDDE), 302-341 (VHKYPVYSVAWSALTGKIASAGSDGKIVVYSETEKGKWVI), and 349-383 (HGVHEINCVIWAQLDDENEILVSAGDDGYVNLWKI).

This sequence belongs to the WD repeat CIA1 family. As to quaternary structure, interacts with NAR1.

Its subcellular location is the cytoplasm. It localises to the nucleus. In terms of biological role, essential component of the cytosolic iron-sulfur (Fe/S) protein assembly machinery. Required for the maturation of extramitochondrial Fe/S proteins. The sequence is that of Probable cytosolic iron-sulfur protein assembly protein 1 from Candida albicans (strain SC5314 / ATCC MYA-2876) (Yeast).